Consider the following 112-residue polypeptide: Putative UPF0320 protein YEL074W (112 aa).

The segment at 93 to 112 (EKSPSKSPKHKNILPFNFTK) is disordered.

This sequence belongs to the UPF0320 family.

The sequence is that of Putative UPF0320 protein YEL074W from Saccharomyces cerevisiae (strain ATCC 204508 / S288c) (Baker's yeast).